The chain runs to 397 residues: 3-ketoacyl-CoA thiolase, mitochondrial (397 aa).

Residues 1-16 (MALLRGVFVVAAKRTP) constitute a mitochondrion; not cleaved transit peptide. N6-acetyllysine; alternate is present on lysine 25. Residue lysine 25 is modified to N6-succinyllysine; alternate. Lysine 45 carries the post-translational modification N6-succinyllysine. Cysteine 92 serves as the catalytic Acyl-thioester intermediate. Residue threonine 119 is modified to Phosphothreonine. The residue at position 121 (serine 121) is a Phosphoserine. Position 127 is a phosphotyrosine (tyrosine 127). Threonine 136 is subject to Phosphothreonine. Lysine 137 carries the N6-acetyllysine; alternate modification. Lysine 137 carries the N6-succinyllysine; alternate modification. Serine 140 bears the Phosphoserine mark. N6-acetyllysine; alternate is present on residues lysine 143, lysine 171, lysine 191, and lysine 209. Lysine 143, lysine 171, lysine 191, and lysine 209 each carry N6-succinyllysine; alternate. Residues lysine 211, lysine 212, and lysine 214 each carry the N6-succinyllysine modification. CoA is bound by residues arginine 224 and threonine 227. Lysine 234 is modified (N6-acetyllysine; alternate). Position 234 is an N6-succinyllysine; alternate (lysine 234). Lysine 240 carries the N6-succinyllysine modification. Residue lysine 241 is modified to N6-acetyllysine. Residue serine 251 coordinates CoA. An N6-acetyllysine mark is found at lysine 269 and lysine 270. Lysine 305 bears the N6-acetyllysine; alternate mark. N6-succinyllysine; alternate is present on lysine 305. Serine 310 is modified (phosphoserine). Lysine 312 bears the N6-acetyllysine; alternate mark. N6-succinyllysine; alternate is present on lysine 312. Serine 333 bears the Phosphoserine mark. Residues lysine 340 and lysine 375 each carry the N6-acetyllysine modification. The active-site Proton donor/acceptor is cysteine 382.

Belongs to the thiolase-like superfamily. Thiolase family. In terms of assembly, homotetramer. Interacts with BNIP3.

The protein resides in the mitochondrion. The enzyme catalyses an acyl-CoA + acetyl-CoA = a 3-oxoacyl-CoA + CoA. The catalysed reaction is 2 acetyl-CoA = acetoacetyl-CoA + CoA. It catalyses the reaction acetyl-CoA + H2O = acetate + CoA + H(+). It carries out the reaction propanoyl-CoA + H2O = propanoate + CoA + H(+). The enzyme catalyses butanoyl-CoA + H2O = butanoate + CoA + H(+). The catalysed reaction is hexanoyl-CoA + H2O = hexanoate + CoA + H(+). It catalyses the reaction octanoyl-CoA + H2O = octanoate + CoA + H(+). It carries out the reaction decanoyl-CoA + H2O = decanoate + CoA + H(+). The enzyme catalyses dodecanoyl-CoA + H2O = dodecanoate + CoA + H(+). The catalysed reaction is tetradecanoyl-CoA + H2O = tetradecanoate + CoA + H(+). It catalyses the reaction hexadecanoyl-CoA + H2O = hexadecanoate + CoA + H(+). Its pathway is lipid metabolism; fatty acid beta-oxidation. In the production of energy from fats, this is one of the enzymes that catalyzes the last step of the mitochondrial beta-oxidation pathway, an aerobic process breaking down fatty acids into acetyl-CoA. Using free coenzyme A/CoA, catalyzes the thiolytic cleavage of medium- to long-chain unbranched 3-oxoacyl-CoAs into acetyl-CoA and a fatty acyl-CoA shortened by two carbon atoms. Also catalyzes the condensation of two acetyl-CoA molecules into acetoacetyl-CoA and could be involved in the production of ketone bodies. Also displays hydrolase activity on various fatty acyl-CoAs. Thereby, could be responsible for the production of acetate in a side reaction to beta-oxidation. Abolishes BNIP3-mediated apoptosis and mitochondrial damage. The polypeptide is 3-ketoacyl-CoA thiolase, mitochondrial (ACAA2) (Pongo abelii (Sumatran orangutan)).